Here is a 528-residue protein sequence, read N- to C-terminus: Atypical kinase COQ8B, mitochondrial (528 aa).

Residues 93-109 (LASFGGLAVGLGLGALA) traverse the membrane as a helical segment. The KxGQ motif signature appears at 151 to 154 (KIGQ). A Protein kinase domain is found at 187–419 (MMKVLEEELG…DRVLQKSQDL (233 aa)). Residues 212-215 (AAAS) carry the AAAS motif motif. Residues S215, K233, and 320–323 (MELA) contribute to the ATP site. D363 acts as the Proton acceptor in catalysis. Residues N368 and D382 each contribute to the ATP site.

It belongs to the protein kinase superfamily. ADCK protein kinase family. Homodimer; homodimerizes via its transmembrane region. Interacts with COQ6 and COQ7. Interacts with the multi-subunit COQ enzyme complex, composed of at least COQ3, COQ4, COQ5, COQ6, COQ7 and COQ9. In the kidney, expressed in glomeruli, predominantly in podocyte foot precesses, as well as in proximal tubules and collecting ducts (at protein level).

It is found in the mitochondrion membrane. The protein resides in the cytoplasm. It localises to the cytosol. The protein localises to the cell membrane. It functions in the pathway cofactor biosynthesis; ubiquinone biosynthesis. Functionally, atypical kinase involved in the biosynthesis of coenzyme Q, also named ubiquinone, an essential lipid-soluble electron transporter for aerobic cellular respiration. Its substrate specificity is still unclear: may act as a protein kinase that mediates phosphorylation of COQ3. According to other reports, acts as a small molecule kinase, possibly a lipid kinase that phosphorylates a prenyl lipid in the ubiquinone biosynthesis pathway, as suggested by its ability to bind coenzyme Q lipid intermediates. However, the small molecule kinase activity was not confirmed by another publication. Required for podocyte migration. The protein is Atypical kinase COQ8B, mitochondrial of Rattus norvegicus (Rat).